Consider the following 68-residue polypeptide: Large ribosomal subunit protein uL29 (68 aa).

The protein belongs to the universal ribosomal protein uL29 family.

In Finegoldia magna (strain ATCC 29328 / DSM 20472 / WAL 2508) (Peptostreptococcus magnus), this protein is Large ribosomal subunit protein uL29.